An 835-amino-acid polypeptide reads, in one-letter code: MIGILKKVFDVNQRQIKRMQKTVEQIDALEPSIKPLTDEQLKGKTLEFKERLTKGETVDDLLPEAFAVVREAATRVLGMRPYGVQLMGGIALHEGNISEMKTGEGKTLTSTLPVYLNALTGKGVHVVTVNEYLAQRDASEMGQLHEFLGLTVGINLNSMSREEKQEAYAADITYSTNNELGFDYLRDNMVLYKEQCVQRPLHFAIIDEVDSILVDEARTPLIISGQAQKSTELYMFANAFVRTLENEKDYSFDVKTKNVMLTEDGITKAEKAFHIENLFDLKHVALLHHINQALRAHVVMHRDTDYVVQEGEIVIVDQFTGRLMKGRRYSEGLHQAIEAKEGVEIQNESMTLATITFQNYFRMYEKLSGMTGTAKTEEEEFRNIYNMNVIVIPTNKPIIRDDRADLIFKSMEGKFNAVVEDIVNRHKQGQPVLVGTVAIETSELISKMLTRKGVRHNILNAKNHAREADIIAEAGIKGAVTIATNMAGRGTDIKLGDDVKNVGLAVIGTERHESRRIDNQLRGRAGRQGDPGVTQFYLSMEDELMRRFGSDNMKAMMDRLGMDDSQPIESKMVSRAVESAQKRVEGNNYDARKQLLQYDDVLRQQREVIYKQRQEVMESENLRGIIEGMMKSTVERAVALHTQEEIEEDWNIKGLVDYLNTNLLQEGDVKEEELRRLAPEEMSEPIIAKLIERYNDKEKLMPEEQMREFEKVVVFRVVDTKWTEHIDAMDHLREGIHLRAYGQIDPLREYQMEGFAMFESMIASIEEEISRYIMKAEIEQNLERQEVVQGEAVHPSSDGEEAKKKPVVKGEQVGRNDLCKCGSGKKYKNCCGIGK.

ATP-binding positions include Gln85, 103–107, and Asp492; that span reads GEGKT. The disordered stretch occupies residues 788–807; sequence VQGEAVHPSSDGEEAKKKPV. 4 residues coordinate Zn(2+): Cys819, Cys821, Cys830, and Cys831.

This sequence belongs to the SecA family. Monomer and homodimer. Part of the essential Sec protein translocation apparatus which comprises SecA, SecYEG and auxiliary proteins SecDF. Other proteins may also be involved. Zn(2+) serves as cofactor.

It is found in the cell membrane. The protein localises to the cytoplasm. It carries out the reaction ATP + H2O + cellular proteinSide 1 = ADP + phosphate + cellular proteinSide 2.. Functionally, part of the Sec protein translocase complex. Interacts with the SecYEG preprotein conducting channel. Has a central role in coupling the hydrolysis of ATP to the transfer of proteins into and across the cell membrane, serving as an ATP-driven molecular motor driving the stepwise translocation of polypeptide chains across the membrane. The sequence is that of Protein translocase subunit SecA from Bacillus cereus (strain ATCC 10987 / NRS 248).